Reading from the N-terminus, the 271-residue chain is Cytosolic Fe-S cluster assembly factor NUBP2 (271 aa).

An N-acetylmethionine modification is found at methionine 1. Residue 22-29 (GKGGVGKS) participates in ATP binding. Positions 196 and 199 each coordinate [4Fe-4S] cluster.

Belongs to the Mrp/NBP35 ATP-binding proteins family. NUBP2/CFD1 subfamily. As to quaternary structure, heterotetramer of 2 NUBP1 and 2 NUBP2 chains. Interacts with KIFC1. Interacts with NUBP1. The cofactor is [4Fe-4S] cluster.

It localises to the nucleus. Its subcellular location is the cytoplasm. The protein resides in the cytoskeleton. The protein localises to the microtubule organizing center. It is found in the centrosome. It localises to the cilium axoneme. Its subcellular location is the centriole. Functionally, component of the cytosolic iron-sulfur (Fe/S) protein assembly (CIA) machinery. Required for maturation of extramitochondrial Fe-S proteins. The NUBP1-NUBP2 heterotetramer forms a Fe-S scaffold complex, mediating the de novo assembly of an Fe-S cluster and its transfer to target apoproteins. Negatively regulates cilium formation and structure. The protein is Cytosolic Fe-S cluster assembly factor NUBP2 of Bos taurus (Bovine).